Reading from the N-terminus, the 387-residue chain is Lipid-A-disaccharide synthase (387 aa).

The protein belongs to the LpxB family.

It catalyses the reaction a lipid X + a UDP-2-N,3-O-bis[(3R)-3-hydroxyacyl]-alpha-D-glucosamine = a lipid A disaccharide + UDP + H(+). The protein operates within bacterial outer membrane biogenesis; LPS lipid A biosynthesis. Its function is as follows. Condensation of UDP-2,3-diacylglucosamine and 2,3-diacylglucosamine-1-phosphate to form lipid A disaccharide, a precursor of lipid A, a phosphorylated glycolipid that anchors the lipopolysaccharide to the outer membrane of the cell. The protein is Lipid-A-disaccharide synthase of Nitrosococcus oceani (strain ATCC 19707 / BCRC 17464 / JCM 30415 / NCIMB 11848 / C-107).